A 146-amino-acid polypeptide reads, in one-letter code: Single-stranded DNA-binding protein, mitochondrial (146 aa).

Residues 1–16 (MLRNASAQILKQFVRH) constitute a mitochondrion transit peptide. The 112-residue stretch at 29–140 (INKVQILGRV…IIADNIVFLS (112 aa)) folds into the SSB domain.

The protein resides in the mitochondrion. It is found in the mitochondrion matrix. Its subcellular location is the mitochondrion nucleoid. Its function is as follows. Binds preferentially and cooperatively to pyrimidine rich single-stranded DNA (ss-DNA). May be required to maintain the copy number of mitochondrial DNA (mtDNA) and play a crucial role during mtDNA replication. Required for retinal ganglion cell differentiation and retinal integrity. This is Single-stranded DNA-binding protein, mitochondrial from Danio rerio (Zebrafish).